The chain runs to 269 residues: GTP cyclohydrolase FolE2 (269 aa).

This sequence belongs to the GTP cyclohydrolase IV family.

It carries out the reaction GTP + H2O = 7,8-dihydroneopterin 3'-triphosphate + formate + H(+). It functions in the pathway cofactor biosynthesis; 7,8-dihydroneopterin triphosphate biosynthesis; 7,8-dihydroneopterin triphosphate from GTP: step 1/1. Its function is as follows. Converts GTP to 7,8-dihydroneopterin triphosphate. The sequence is that of GTP cyclohydrolase FolE2 from Burkholderia ambifaria (strain MC40-6).